Reading from the N-terminus, the 867-residue chain is Putative tyrosine-protein kinase F09A5.2 (867 aa).

Transmembrane regions (helical) follow at residues 45–65 (VMKILSGFSLIIIVVFIFATS) and 355–375 (LLLIIGIPCISLTICCIAFFV). N395 and N423 each carry an N-linked (GlcNAc...) asparagine glycan. In terms of domain architecture, Protein kinase spans 467–757 (VQEDHLLGNG…FNEMRGEITV (291 aa)). An ATP-binding site is contributed by 473-481 (LGNGAFANV). 2 N-linked (GlcNAc...) asparagine glycosylation sites follow: N496 and N500. K516 lines the ATP pocket. N585 carries N-linked (GlcNAc...) asparagine glycosylation. The active-site Proton acceptor is the D626. Disordered stretches follow at residues 782–821 (LTMQDSKETAPCSTPGGSQDMDEDGDYDSGSEGHSQGTCA) and 848–867 (SKSMRGKRRQSNSTVSTYQS). Acidic residues predominate over residues 801 to 810 (DMDEDGDYDS). Positions 858 to 867 (SNSTVSTYQS) are enriched in polar residues. N859 carries N-linked (GlcNAc...) asparagine glycosylation.

Belongs to the protein kinase superfamily. Tyr protein kinase family.

Its subcellular location is the membrane. The enzyme catalyses L-tyrosyl-[protein] + ATP = O-phospho-L-tyrosyl-[protein] + ADP + H(+). In Caenorhabditis elegans, this protein is Putative tyrosine-protein kinase F09A5.2.